The following is a 217-amino-acid chain: Probable transaldolase (217 aa).

Lys-83 acts as the Schiff-base intermediate with substrate in catalysis.

The protein belongs to the transaldolase family. Type 3B subfamily.

The protein localises to the cytoplasm. The catalysed reaction is D-sedoheptulose 7-phosphate + D-glyceraldehyde 3-phosphate = D-erythrose 4-phosphate + beta-D-fructose 6-phosphate. Its pathway is carbohydrate degradation; pentose phosphate pathway; D-glyceraldehyde 3-phosphate and beta-D-fructose 6-phosphate from D-ribose 5-phosphate and D-xylulose 5-phosphate (non-oxidative stage): step 2/3. Transaldolase is important for the balance of metabolites in the pentose-phosphate pathway. This Clostridium botulinum (strain Loch Maree / Type A3) protein is Probable transaldolase.